The primary structure comprises 214 residues: Serine protease inhibitor 2.1 (214 aa).

It belongs to the serpin family.

This chain is Serine protease inhibitor 2.1, found in Rattus norvegicus (Rat).